Here is a 218-residue protein sequence, read N- to C-terminus: Adenylate kinase (218 aa).

Residue 10–15 participates in ATP binding; sequence GAGKGT. An NMP region spans residues 30-59; it reads STGDMLRAAVKAGTPLGIAAKKIMDEGGLV. Residues Thr-31, Arg-36, 57 to 59, 85 to 88, and Gln-92 contribute to the AMP site; these read GLV and GFPR. Residues 122-159 are LID; sequence GRRVHPASGRTYHVKFNPPKVAGKDDLTGEELIQRDDD. ATP is bound by residues Arg-123 and 132 to 133; that span reads TY. 2 residues coordinate AMP: Arg-156 and Arg-167. Gly-203 provides a ligand contact to ATP.

It belongs to the adenylate kinase family. Monomer.

It is found in the cytoplasm. The enzyme catalyses AMP + ATP = 2 ADP. It functions in the pathway purine metabolism; AMP biosynthesis via salvage pathway; AMP from ADP: step 1/1. In terms of biological role, catalyzes the reversible transfer of the terminal phosphate group between ATP and AMP. Plays an important role in cellular energy homeostasis and in adenine nucleotide metabolism. The chain is Adenylate kinase from Janthinobacterium sp. (strain Marseille) (Minibacterium massiliensis).